The chain runs to 309 residues: Ribonuclease Z (309 aa).

Zn(2+) contacts are provided by His63, His65, Asp67, His68, His141, Asp212, and His270. Residue Asp67 is the Proton acceptor of the active site.

This sequence belongs to the RNase Z family. As to quaternary structure, homodimer. Zn(2+) is required as a cofactor.

The catalysed reaction is Endonucleolytic cleavage of RNA, removing extra 3' nucleotides from tRNA precursor, generating 3' termini of tRNAs. A 3'-hydroxy group is left at the tRNA terminus and a 5'-phosphoryl group is left at the trailer molecule.. Its function is as follows. Zinc phosphodiesterase, which displays some tRNA 3'-processing endonuclease activity. Probably involved in tRNA maturation, by removing a 3'-trailer from precursor tRNA. This is Ribonuclease Z from Limosilactobacillus reuteri (strain DSM 20016) (Lactobacillus reuteri).